Reading from the N-terminus, the 885-residue chain is Insulin receptor substrate 1-A (885 aa).

An IRS-type PTB domain is found at 1-56 (MNIRRCGHSENFFFIEVGRSAVTGAGEFWMQVDDSVVAQNMHETILEAMKALSDEF). The interval 56 to 225 (FRPRSKSQSS…GGFISSDEYG (170 aa)) is disordered. 4 stretches are compositionally biased toward low complexity: residues 61-75 (KSQSSSNCSNPISVP), 99-109 (SATATSPAGGA), 176-197 (SPSATSPVSLSSSSTSGHGSTS), and 205-217 (SSASISGSPSDGG). Serine 104 carries the post-translational modification Phosphoserine. At tyrosine 257 the chain carries Phosphotyrosine; by INSR. The YXXM motif 1 motif lies at 257 to 260 (YICM). 2 stretches are compositionally biased toward polar residues: residues 263–276 (SSSHLQRGPQQRYQ) and 296–313 (SSGTSPPTVSHQKTPSQS). Disordered stretches follow at residues 263-282 (SSSHLQRGPQQRYQPSRGEE) and 293-313 (RTHSSGTSPPTVSHQKTPSQS). 5 consecutive short sequence motifs (YXXM motif) follow at residues 318–321 (YTEM), 364–367 (YMPM), 381–384 (YMPM), 409–412 (YMMM), and 451–454 (YINM). Phosphotyrosine; by INSR is present on residues tyrosine 364 and tyrosine 381. Tyrosine 409 carries the phosphotyrosine modification. The disordered stretch occupies residues 501–581 (NLRISANSGH…LPPEPKSPGE (81 aa)). The segment covering 504 to 515 (ISANSGHNLYTE) has biased composition (polar residues). A compositionally biased stretch (low complexity) spans 516–526 (DSSSSSTSSDS). Residues tyrosine 582 and tyrosine 620 each carry the phosphotyrosine; by INSR modification. Residues 582 to 584 (YVN) form a GRB2-binding region. Residues 620 to 623 (YMNM) carry the YXXM motif 7 motif. The span at 637-660 (TSSYEPPNKPVNSVCPTETCSSSR) shows a compositional bias: polar residues. Residues 637-665 (TSSYEPPNKPVNSVCPTETCSSSRPPIRG) form a disordered region. Tyrosine 672 carries the phosphotyrosine; by INSR modification. Short sequence motifs (YXXM motif) lie at residues 672 to 675 (YMSM) and 706 to 709 (YAEM). A disordered region spans residues 732–803 (ASRSSLLGQG…SGEDVKRHSS (72 aa)). Polar residues-rich tracts occupy residues 743-758 (GPSAFTRVSLSPNRNP) and 777-792 (ETFSSTPTTARVTTGP). A phosphotyrosine; by INSR mark is found at tyrosine 834 and tyrosine 866.

In terms of assembly, interacts with the NPXY motif of tyrosine-phosphorylated igf1r and insr via the PTB domain. Binds to phosphatidylinositol 3-kinase p85 subunit at a low level in vitro prior to phosphorylation. Binding is greatly enhanced following tyrosine phosphorylation by insr and probably occurs via the phosphorylated YXXM motifs. In terms of processing, phosphorylation of Tyr-582 is required for grb2-binding.

Its function is as follows. May mediate the control of various cellular processes by insulin. When phosphorylated by the insulin receptor binds specifically to various cellular proteins containing SH2 domains such as phosphatidylinositol 3-kinase p85 subunit or grb2. Activates phosphatidylinositol 3-kinase when bound to the regulatory p85 subunit. In Xenopus laevis (African clawed frog), this protein is Insulin receptor substrate 1-A (irs1-a).